The following is a 186-amino-acid chain: Coiled-coil domain-containing protein ORF13 (186 aa).

Coiled-coil stretches lie at residues 2–30 (GIKE…DFIK) and 63–85 (LREK…QRDK).

The protein is Coiled-coil domain-containing protein ORF13 of Helicobacter pylori (strain 35A).